A 161-amino-acid chain; its full sequence is Putative acetyltransferase SAV0762 (161 aa).

Belongs to the transferase hexapeptide repeat family.

The polypeptide is Putative acetyltransferase SAV0762 (Staphylococcus aureus (strain Mu50 / ATCC 700699)).